The primary structure comprises 865 residues: DNA mismatch repair protein MutS (865 aa).

Residue G609–S616 participates in ATP binding.

This sequence belongs to the DNA mismatch repair MutS family.

In terms of biological role, this protein is involved in the repair of mismatches in DNA. It is possible that it carries out the mismatch recognition step. This protein has a weak ATPase activity. The sequence is that of DNA mismatch repair protein MutS from Leuconostoc citreum (strain KM20).